Consider the following 277-residue polypeptide: 2-dehydro-3-deoxyphosphooctonate aldolase (277 aa).

This sequence belongs to the KdsA family.

It localises to the cytoplasm. It carries out the reaction D-arabinose 5-phosphate + phosphoenolpyruvate + H2O = 3-deoxy-alpha-D-manno-2-octulosonate-8-phosphate + phosphate. The protein operates within carbohydrate biosynthesis; 3-deoxy-D-manno-octulosonate biosynthesis; 3-deoxy-D-manno-octulosonate from D-ribulose 5-phosphate: step 2/3. It participates in bacterial outer membrane biogenesis; lipopolysaccharide biosynthesis. The protein is 2-dehydro-3-deoxyphosphooctonate aldolase of Brucella canis (strain ATCC 23365 / NCTC 10854 / RM-666).